A 275-amino-acid polypeptide reads, in one-letter code: MTKDRIDRRFAALKAENRAGFVTYVMAGDPDAATTLSVLKGLPAAGADLIELGFPFSDPMAEGPTIQRAAQRGLKSGMTLQGTLDLVAAFREGDQDTPIILMGYLNPVLNKGFETFAALAAKAGVDGLIIVDCPPEEADPLSDALEAEGIALIRLAAPTTDDARLPMVVRRTSGFVYYVSVAGVTGVKSADAADVAPAVERLRKASGLPVAVGFGIRTPDQAAAVAKVADAAVVGSALVDEIESAAQLNENVTEKVLLKASELAKAVRSARVGTK.

E51 serves as the catalytic Proton acceptor.

Belongs to the TrpA family. In terms of assembly, tetramer of two alpha and two beta chains.

The enzyme catalyses (1S,2R)-1-C-(indol-3-yl)glycerol 3-phosphate + L-serine = D-glyceraldehyde 3-phosphate + L-tryptophan + H2O. Its pathway is amino-acid biosynthesis; L-tryptophan biosynthesis; L-tryptophan from chorismate: step 5/5. The alpha subunit is responsible for the aldol cleavage of indoleglycerol phosphate to indole and glyceraldehyde 3-phosphate. The sequence is that of Tryptophan synthase alpha chain from Caulobacter vibrioides (strain ATCC 19089 / CIP 103742 / CB 15) (Caulobacter crescentus).